The primary structure comprises 1427 residues: DNA-directed RNA polymerase subunit beta' (1427 aa).

Residues cysteine 66, cysteine 68, cysteine 81, and cysteine 84 each contribute to the Zn(2+) site. Mg(2+) is bound by residues aspartate 472, aspartate 474, and aspartate 476. Zn(2+) contacts are provided by cysteine 815, cysteine 889, cysteine 896, and cysteine 899.

The protein belongs to the RNA polymerase beta' chain family. As to quaternary structure, the RNAP catalytic core consists of 2 alpha, 1 beta, 1 beta' and 1 omega subunit. When a sigma factor is associated with the core the holoenzyme is formed, which can initiate transcription. Mg(2+) is required as a cofactor. Zn(2+) serves as cofactor.

The catalysed reaction is RNA(n) + a ribonucleoside 5'-triphosphate = RNA(n+1) + diphosphate. Its function is as follows. DNA-dependent RNA polymerase catalyzes the transcription of DNA into RNA using the four ribonucleoside triphosphates as substrates. The protein is DNA-directed RNA polymerase subunit beta' of Bacteroides thetaiotaomicron (strain ATCC 29148 / DSM 2079 / JCM 5827 / CCUG 10774 / NCTC 10582 / VPI-5482 / E50).